A 1357-amino-acid polypeptide reads, in one-letter code: DNA-directed RNA polymerase subunit beta (1357 aa).

It belongs to the RNA polymerase beta chain family. The RNAP catalytic core consists of 2 alpha, 1 beta, 1 beta' and 1 omega subunit. When a sigma factor is associated with the core the holoenzyme is formed, which can initiate transcription.

The enzyme catalyses RNA(n) + a ribonucleoside 5'-triphosphate = RNA(n+1) + diphosphate. DNA-dependent RNA polymerase catalyzes the transcription of DNA into RNA using the four ribonucleoside triphosphates as substrates. The polypeptide is DNA-directed RNA polymerase subunit beta (Pseudomonas fluorescens (strain ATCC BAA-477 / NRRL B-23932 / Pf-5)).